Consider the following 266-residue polypeptide: HLA class II histocompatibility antigen, DRB1 beta chain (266 aa).

Residues Met1 to Ser29 form the signal peptide. The tract at residues Gly30–Val124 is beta-1. Over Gly30–Lys227 the chain is Extracellular. An intrachain disulfide couples Cys44 to Cys108. N-linked (GlcNAc...) asparagine glycosylation occurs at Asn48. Asp86, Trp90, His110, Asn111, and Arg122 together coordinate a peptide antigen. The interval Gln125–Lys227 is beta-2. The Ig-like C1-type domain maps to Pro126–Thr214. Cys146 and Cys202 form a disulfide bridge. Residues Met228–Ile248 traverse the membrane as a helical segment. The Cytoplasmic segment spans residues Tyr249–Ser266. Lys254 participates in a covalent cross-link: Glycyl lysine isopeptide (Lys-Gly) (interchain with G-Cter in ubiquitin).

In terms of assembly, heterotrimer that consists of an alpha chain HLA-DRA, a beta chain HLA-DRB1 and a peptide (peptide-MHCII). Newly synthesized alpha and beta chains forms a heterodimer (MHCII) that associates with the CD74/invariant chain (Ii) in the endoplasmic reticulum (ER). Ii is a trimer composed of three subunits and each subunit interacts with one MHCII dimer, blocking the peptide-binding cleft. As a result, MHCII molecules cannot bind peptides present in the ER. The complex of MHCII and CD74/Ii is transported in vesicles from ER to Golgi to lysosomes, where it encounters antigenic peptides generated via proteolysis of endocytosed antigens. MHCII dimers are dissociated from CD74/Ii by the combined action of proteolysis and HLA-DM. Lysosomal enzymes such as cathepsin, degrade CD74/Ii leaving a 24 amino acid remnant called class II-associated Ii or CLIP. Interacts (via the peptide binding cleft) with CLIP; this interaction inhibits antigen peptide binding before entry in the endosomal compartment. The displacement of CLIP and replacement by a high affinity peptide in lysosomes is performed by HLA-DM heterodimer. HLA-DM catalyzes CLIP dissociation from MHCII, stabilizes empty MHCII and mediates the selection of high affinity peptides. Interacts with HLA-DM heterodimer; this interaction is direct. Interacts with TCR (via CDR3). Interacts (via beta-2 domain) with CD4 coreceptor (via Ig-like V-type domain); this interaction is of exceptionally low affinity yet necessary for optimal recognition of antigenic peptides. As to quaternary structure, (Microbial infection) Interacts with Staphylococcus aureus enterotoxin A/entA, enterotoxin B/entB, enterotoxin C1/entC1, enterotoxin D/entD and enterotoxin H/entH. Enterotoxins bind outside the peptide-binding cleft of MHCII: enterotoxin H/entH interacts via the beta-1 domain of MHCII and in a zinc-dependent way, whereas enterotoxin B/entB interacts primarily via the alpha-1 domain. (Microbial infection) Interacts with Epstein-Barr virus gp42 protein. In terms of processing, ubiquitinated by MARCHF1 and MARCHF8 at Lys-254 leading to sorting into the endosome system and down-regulation of MHCII. Expressed in professional APCs: monocyte/macrophages, dendritic cells and B cells (at protein level). Expressed in thymic epithelial cells (at protein level).

The protein localises to the cell membrane. The protein resides in the endoplasmic reticulum membrane. It localises to the lysosome membrane. Its subcellular location is the late endosome membrane. It is found in the autolysosome membrane. A beta chain of antigen-presenting major histocompatibility complex class II (MHCII) molecule. In complex with the alpha chain HLA-DRA, displays antigenic peptides on professional antigen presenting cells (APCs) for recognition by alpha-beta T cell receptor (TCR) on HLA-DRB1-restricted CD4-positive T cells. This guides antigen-specific T-helper effector functions, both antibody-mediated immune response and macrophage activation, to ultimately eliminate the infectious agents and transformed cells. Typically presents extracellular peptide antigens of 10 to 30 amino acids that arise from proteolysis of endocytosed antigens in lysosomes. In the tumor microenvironment, presents antigenic peptides that are primarily generated in tumor-resident APCs likely via phagocytosis of apoptotic tumor cells or macropinocytosis of secreted tumor proteins. Presents peptides derived from intracellular proteins that are trapped in autolysosomes after macroautophagy, a mechanism especially relevant for T cell selection in the thymus and central immune tolerance. The selection of the immunodominant epitopes follows two processing modes: 'bind first, cut/trim later' for pathogen-derived antigenic peptides and 'cut first, bind later' for autoantigens/self-peptides. The anchor residue at position 1 of the peptide N-terminus, usually a large hydrophobic residue, is essential for high affinity interaction with MHCII molecules. Functionally, allele DRB1*01:01: Displays an immunodominant epitope derived from Bacillus anthracis pagA/protective antigen, PA (KLPLYISNPNYKVNVYAVT), to both naive and PA-specific memory CD4-positive T cells. Presents immunodominant HIV-1 gag peptide (FRDYVDRFYKTLRAEQASQE) on infected dendritic cells for recognition by TRAV24-TRBV2 TCR on CD4-positive T cells and controls viral load. May present to T-helper 1 cells several HRV-16 epitopes derived from capsid proteins VP1 (PRFSLPFLSIASAYYMFYDG) and VP2 (PHQFINLRSNNSATLIVPYV), contributing to viral clearance. Displays commonly recognized peptides derived from IAV external protein HA (PKYVKQNTLKLAT and SNGNFIAPEYAYKIVK) and from internal proteins M, NP and PB1, with M-derived epitope (GLIYNRMGAVTTEV) being the most immunogenic. Presents a self-peptide derived from COL4A3 (GWISLWKGFSF) to TCR (TRAV14 biased) on CD4-positive, FOXP3-positive regulatory T cells and mediates immune tolerance to self. May present peptides derived from oncofetal trophoblast glycoprotein TPBG 5T4, known to be recognized by both T-helper 1 and regulatory T cells. Displays with low affinity a self-peptide derived from MBP (VHFFKNIVTPRTP). Its function is as follows. Allele DRB1*03:01: May present to T-helper 1 cells an HRV-16 epitope derived from capsid protein VP2 (NEKQPSDDNWLNFDGTLLGN), contributing to viral clearance. Displays self-peptides derived from retinal SAG (NRERRGIALDGKIKHE) and thyroid TG (LSSVVVDPSIRHFDV). Presents viral epitopes derived from HHV-6B gH/U48 and U85 antigens to polyfunctional CD4-positive T cells with cytotoxic activity implicated in control of HHV-6B infection. Presents several immunogenic epitopes derived from C.tetani neurotoxin tetX, playing a role in immune recognition and long-term protection. In terms of biological role, allele DRB1*04:01: Presents an immunodominant bacterial epitope derived from M.tuberculosis esxB/culture filtrate antigen CFP-10 (EISTNIRQAGVQYSR), eliciting CD4-positive T cell effector functions such as IFNG production and cytotoxic activity. May present to T-helper 1 cells an HRV-16 epitope derived from capsid protein VP2 (NEKQPSDDNWLNFDGTLLGN), contributing to viral clearance. Presents tumor epitopes derived from melanoma-associated TYR antigen (QNILLSNAPLGPQFP and DYSYLQDSDPDSFQD), triggering CD4-positive T cell effector functions such as GMCSF production. Displays preferentially citrullinated self-peptides derived from VIM (GVYATR/citSSAVR and SAVRAR/citSSVPGVR) and ACAN (VVLLVATEGR/ CitVRVNSAYQDK). Displays self-peptides derived from COL2A1. Allele DRB1*04:02: Displays native or citrullinated self-peptides derived from VIM. Functionally, allele DRB1*04:04: May present to T-helper 1 cells several HRV-16 epitopes derived from capsid proteins VP1 (HIVMQYMYVPPGAPIPTTRN) and VP2 (RGDSTITSQDVANAVVGYGV), contributing to viral clearance. Displays preferentially citrullinated self-peptides derived from VIM (SAVRAR/citSSVPGVR). Its function is as follows. Allele DRB1*04:05: May present to T-helper 1 cells an immunogenic epitope derived from tumor-associated antigen WT1 (KRYFKLSHLQMHSRKH), likely providing for effective antitumor immunity in a wide range of solid and hematological malignancies. In terms of biological role, allele DRB1*05:01: Presents an immunodominant HIV-1 gag peptide (FRDYVDRFYKTLRAEQASQE) on infected dendritic cells for recognition by TRAV24-TRBV2 TCR on CD4-positive T cells and controls viral load. Allele DRB1*07:01: Upon EBV infection, presents latent antigen EBNA2 peptide (PRSPTVFYNIPPMPLPPSQL) to CD4-positive T cells, driving oligoclonal expansion and selection of a dominant virus-specific memory T cell subset with cytotoxic potential to directly eliminate virus-infected B cells. May present to T-helper 1 cells several HRV-16 epitopes derived from capsid proteins VP1 (PRFSLPFLSIASAYYMFYDG) and VP2 (VPYVNAVPMDSMVRHNNWSL), contributing to viral clearance. In the context of tumor immunesurveillance, may present to T-helper 1 cells an immunogenic epitope derived from tumor-associated antigen WT1 (MTEYKLVVVGAVGVGKSALTIQLI), likely providing for effective antitumor immunity in a wide range of solid and hematological malignancies. In metastatic epithelial tumors, presents to intratumoral CD4-positive T cells a KRAS neoantigen (MTEYKLVVVGAVGVGKSALTIQLI) carrying G12V hotspot driver mutation and may mediate tumor regression. Functionally, allele DRB1*11:01: Displays an immunodominant HIV-1 gag peptide (FRDYVDRFYKTLRAEQASQE) on infected dendritic cells for recognition by TRAV24-TRBV2 TCR on CD4-positive T cells and controls viral load. May present to T-helper 1 cells an HRV-16 epitope derived from capsid protein VP2 (SDRIIQITRGDSTITSQDVA), contributing to viral clearance. Presents several immunogenic epitopes derived from C.tetani neurotoxin tetX, playing a role in immune recognition and longterm protection. In the context of tumor immunesurveillance, may present tumor-derived neoantigens to CD4-positive T cells and trigger anti-tumor helper functions. Its function is as follows. Allele DRB1*13:01: Presents viral epitopes derived from HHV-6B antigens to polyfunctional CD4-positive T cells implicated in control of HHV-6B infection. In terms of biological role, allele DRB1*15:01: May present to T-helper 1 cells an HRV-16 epitope derived from capsid protein VP2 (SNNSATLIVPYVNAVPMDSM), contributing to viral clearance. Displays a self-peptide derived from MBP (ENPVVHFFKNIVTPR). May present to T-helper 1 cells an immunogenic epitope derived from tumor-associated antigen WT1 (KRYFKLSHLQMHSRKH), likely providing for effective antitumor immunity in a wide range of solid and hematological malignancies. Allele DRB1*15:02: Displays an immunodominant HIV-1 gag peptide (FRDYVDRFYKTLRAEQASQE) on infected dendritic cells for recognition by TRAV24-TRBV2 TCR on CD4-positive T cells and controls viral load. May present to T-helper 1 cells an immunogenic epitope derived from tumor-associated antigen WT1 (KRYFKLSHLQMHSRKH), likely providing for effective antitumor immunity in a wide range of solid and hematological malignancies. Functionally, (Microbial infection) Acts as a receptor for Epstein-Barr virus on lymphocytes. This chain is HLA class II histocompatibility antigen, DRB1 beta chain, found in Homo sapiens (Human).